Reading from the N-terminus, the 310-residue chain is Pantothenate kinase (310 aa).

95 to 102 (GSVAVGKS) lines the ATP pocket.

It belongs to the prokaryotic pantothenate kinase family.

The protein resides in the cytoplasm. The catalysed reaction is (R)-pantothenate + ATP = (R)-4'-phosphopantothenate + ADP + H(+). It participates in cofactor biosynthesis; coenzyme A biosynthesis; CoA from (R)-pantothenate: step 1/5. The polypeptide is Pantothenate kinase (Rhodococcus jostii (strain RHA1)).